An 887-amino-acid chain; its full sequence is Alanine--tRNA ligase (887 aa).

Residues H565, H569, C674, and H678 each coordinate Zn(2+).

Belongs to the class-II aminoacyl-tRNA synthetase family. The cofactor is Zn(2+).

The protein resides in the cytoplasm. The enzyme catalyses tRNA(Ala) + L-alanine + ATP = L-alanyl-tRNA(Ala) + AMP + diphosphate. Functionally, catalyzes the attachment of alanine to tRNA(Ala) in a two-step reaction: alanine is first activated by ATP to form Ala-AMP and then transferred to the acceptor end of tRNA(Ala). Also edits incorrectly charged Ser-tRNA(Ala) and Gly-tRNA(Ala) via its editing domain. The sequence is that of Alanine--tRNA ligase from Erythrobacter litoralis (strain HTCC2594).